A 1097-amino-acid polypeptide reads, in one-letter code: Platelet-derived growth factor receptor beta (1097 aa).

A signal peptide spans Met-1–Gly-31. Ig-like C2-type domains are found at residues Leu-32–Val-119, Pro-128–Gln-209, and Ile-213–Thr-308. Residues Leu-32–Val-531 lie on the Extracellular side of the membrane. N-linked (GlcNAc...) asparagine glycans are attached at residues Asn-44, Asn-88, and Asn-102. Cysteines 53 and 99 form a disulfide. Residues Cys-148 and Cys-189 are joined by a disulfide bond. N-linked (GlcNAc...) asparagine glycosylation is present at Asn-214. Residues Cys-234 and Cys-290 are joined by a disulfide bond. Asn-291, Asn-306, Asn-353, Asn-370, Asn-444, Asn-467, and Asn-478 each carry an N-linked (GlcNAc...) asparagine glycan. In terms of domain architecture, Ig-like C2-type 4 spans Pro-415 to Val-523. Cys-435 and Cys-507 form a disulfide bridge. Residues Val-532–Ile-552 traverse the membrane as a helical segment. Over Met-553–Leu-1097 the chain is Cytoplasmic. Tyr-561, Tyr-578, and Tyr-580 each carry phosphotyrosine; by autocatalysis. A Protein kinase domain is found at Leu-599–Leu-961. Residues Leu-605–Val-613 and Lys-633 contribute to the ATP site. Residue Tyr-685 is modified to Phosphotyrosine; by ABL1 and ABL2. Residues Tyr-715, Tyr-739, Tyr-750, Tyr-762, Tyr-770, Tyr-774, and Tyr-777 each carry the phosphotyrosine; by autocatalysis modification. Catalysis depends on Asp-825, which acts as the Proton acceptor. Tyr-856 bears the Phosphotyrosine; by autocatalysis mark. Phosphotyrosine; by ABL1 and ABL2 occurs at positions 933 and 969. 2 positions are modified to phosphotyrosine; by autocatalysis: Tyr-1008 and Tyr-1020. Residues Thr-1016–Leu-1097 form a disordered region. Polar residues predominate over residues Ser-1042–Cys-1059. Positions Glu-1072–Gln-1081 are enriched in low complexity.

It belongs to the protein kinase superfamily. Tyr protein kinase family. CSF-1/PDGF receptor subfamily. Interacts with homodimeric PDGFB and PDGFD, and with heterodimers formed by PDGFA and PDGFB. May also interact with homodimeric PDGFC. Monomer in the absence of bound ligand. Interaction with homodimeric PDGFB, heterodimers formed by PDGFA and PDGFB or homodimeric PDGFD, leads to receptor dimerization, where both PDGFRA homodimers and heterodimers with PDGFRB are observed. Interacts with SH2B2/APS. Interacts directly (tyrosine phosphorylated) with SHB. Interacts (tyrosine phosphorylated) with PIK3R1 and RASA1. Interacts (tyrosine phosphorylated) with CBL. Interacts (tyrosine phosphorylated) with SRC and SRC family kinases. Interacts (tyrosine phosphorylated) with PIK3C2B, maybe indirectly. Interacts (tyrosine phosphorylated) with SHC1, GRB7, GRB10 and NCK1. Interaction with GRB2 is mediated by SHC1. Interacts (via C-terminus) with NHERF1. In terms of processing, N-glycosylated. Ubiquitinated. After autophosphorylation, the receptor is polyubiquitinated, leading to its degradation. Post-translationally, autophosphorylated on tyrosine residues upon ligand binding. Autophosphorylation occurs in trans, i.e. one subunit of the dimeric receptor phosphorylates tyrosine residues on the other subunit. Phosphorylation at Tyr-578, and to a lesser degree, Tyr-580 is important for interaction with SRC. Phosphorylation at Tyr-715 is important for interaction with GRB2. Phosphorylation at Tyr-739 and Tyr-750 is important for interaction with PIK3R1. Phosphorylation at Tyr-750 is important for interaction with NCK1. Phosphorylation at Tyr-770 and Tyr-856 is important for interaction with RASA1/GAP. Phosphorylation at Tyr-856 is important for efficient phosphorylation of PLCG1 and PTPN11, resulting in increased phosphorylation of AKT1, MAPK1/ERK2 and/or MAPK3/ERK1, PDCD6IP/ALIX and STAM, and in increased cell proliferation. Phosphorylation at Tyr-1008 is important for interaction with PTPN11. Phosphorylation at Tyr-1008 and Tyr-1020 is important for interaction with PLCG1. Dephosphorylated by PTPRJ at Tyr-750, Tyr-856, Tyr-1008 and Tyr-1020. Dephosphorylated by PTPN2 at Tyr-578 and Tyr-1020.

Its subcellular location is the cell membrane. The protein localises to the cytoplasmic vesicle. It is found in the lysosome lumen. The catalysed reaction is L-tyrosyl-[protein] + ATP = O-phospho-L-tyrosyl-[protein] + ADP + H(+). With respect to regulation, present in an inactive conformation in the absence of bound ligand. Binding of PDGFB and/or PDGFD leads to dimerization and activation by autophosphorylation on tyrosine residues. Functionally, tyrosine-protein kinase that acts as a cell-surface receptor for homodimeric PDGFB and PDGFD and for heterodimers formed by PDGFA and PDGFB, and plays an essential role in the regulation of embryonic development, cell proliferation, survival, differentiation, chemotaxis and migration. Plays an essential role in blood vessel development by promoting proliferation, migration and recruitment of pericytes and smooth muscle cells to endothelial cells. Plays a role in the migration of vascular smooth muscle cells and the formation of neointima at vascular injury sites. Required for normal development of the cardiovascular system. Required for normal recruitment of pericytes (mesangial cells) in the kidney glomerulus, and for normal formation of a branched network of capillaries in kidney glomeruli. Promotes rearrangement of the actin cytoskeleton and the formation of membrane ruffles. Binding of its cognate ligands - homodimeric PDGFB, heterodimers formed by PDGFA and PDGFB or homodimeric PDGFD -leads to the activation of several signaling cascades; the response depends on the nature of the bound ligand and is modulated by the formation of heterodimers between PDGFRA and PDGFRB. Phosphorylates PLCG1, PIK3R1, PTPN11, RASA1/GAP, CBL, SHC1 and NCK1. Activation of PLCG1 leads to the production of the cellular signaling molecules diacylglycerol and inositol 1,4,5-trisphosphate, mobilization of cytosolic Ca(2+) and the activation of protein kinase C. Phosphorylation of PIK3R1, the regulatory subunit of phosphatidylinositol 3-kinase, leads to the activation of the AKT1 signaling pathway. Phosphorylation of SHC1, or of the C-terminus of PTPN11, creates a binding site for GRB2, resulting in the activation of HRAS, RAF1 and down-stream MAP kinases, including MAPK1/ERK2 and/or MAPK3/ERK1. Promotes phosphorylation and activation of SRC family kinases. Promotes phosphorylation of PDCD6IP/ALIX and STAM. Receptor signaling is down-regulated by protein phosphatases that dephosphorylate the receptor and its down-stream effectors, and by rapid internalization of the activated receptor. This is Platelet-derived growth factor receptor beta (Pdgfrb) from Rattus norvegicus (Rat).